The sequence spans 1164 residues: DNA-directed RNA polymerase 133 kDa polypeptide (1164 aa).

It belongs to the RNA polymerase beta chain family. As to quaternary structure, the DNA-dependent RNA polymerase used for intermediate and late genes expression consists of eight subunits 147 kDa, 133 kDa, 35 kDa, 30 kDa, 22 kDa, 19 kDa, 18 kDa and 7 kDa totalling more than 500 kDa in mass. The same holoenzyme, with the addition of the transcription-specificity factor RAP94, is used for early gene expression.

It is found in the virion. It carries out the reaction RNA(n) + a ribonucleoside 5'-triphosphate = RNA(n+1) + diphosphate. Part of the DNA-dependent RNA polymerase which catalyzes the transcription of viral DNA into RNA using the four ribonucleoside triphosphates as substrates. Responsible for the transcription of early, intermediate and late genes. DNA-dependent RNA polymerase associates with the early transcription factor (ETF), itself composed of OPG118 and OPG133, thereby allowing the early genes transcription. Late transcription, and probably also intermediate transcription, require newly synthesized RNA polymerase. The polypeptide is DNA-directed RNA polymerase 133 kDa polypeptide (OPG151) (Homo sapiens (Human)).